The chain runs to 118 residues: Large ribosomal subunit protein uL22 (118 aa).

This sequence belongs to the universal ribosomal protein uL22 family. As to quaternary structure, part of the 50S ribosomal subunit.

This protein binds specifically to 23S rRNA; its binding is stimulated by other ribosomal proteins, e.g. L4, L17, and L20. It is important during the early stages of 50S assembly. It makes multiple contacts with different domains of the 23S rRNA in the assembled 50S subunit and ribosome. Its function is as follows. The globular domain of the protein is located near the polypeptide exit tunnel on the outside of the subunit, while an extended beta-hairpin is found that lines the wall of the exit tunnel in the center of the 70S ribosome. This chain is Large ribosomal subunit protein uL22, found in Listeria innocua serovar 6a (strain ATCC BAA-680 / CLIP 11262).